A 544-amino-acid polypeptide reads, in one-letter code: Chaperonin GroEL 2 (544 aa).

ATP-binding positions include 30–33, K51, 87–91, G415, and D496; these read TLGP and DGTTT.

This sequence belongs to the chaperonin (HSP60) family. Forms a cylinder of 14 subunits composed of two heptameric rings stacked back-to-back. Interacts with the co-chaperonin GroES.

It is found in the cytoplasm. It catalyses the reaction ATP + H2O + a folded polypeptide = ADP + phosphate + an unfolded polypeptide.. In terms of biological role, together with its co-chaperonin GroES, plays an essential role in assisting protein folding. The GroEL-GroES system forms a nano-cage that allows encapsulation of the non-native substrate proteins and provides a physical environment optimized to promote and accelerate protein folding. In Rhizobium johnstonii (strain DSM 114642 / LMG 32736 / 3841) (Rhizobium leguminosarum bv. viciae), this protein is Chaperonin GroEL 2.